The following is a 269-amino-acid chain: Putative hydro-lyase M446_2125 (269 aa).

The protein belongs to the D-glutamate cyclase family.

The chain is Putative hydro-lyase M446_2125 from Methylobacterium sp. (strain 4-46).